A 346-amino-acid chain; its full sequence is MTYALEVDGVDKSFGGATILRGVAFAVEPGSTTAIVGPSGCGKTTLLRLIAGFEKPDAGTIALAGRVVAGGGWTPAHRRSVGYVAQDGALFPHATVGANVGFGLPRRARTPARIAELLEMVSLDPSFAVRRPDQLSGGQQQRVALARALAREPELMLLDEPFSALDAGLRANTRRIVADVLAKAAITTILVTHDQPEALSFAGRVAVMSAGRLAQIGTPREIYSTPIDVATAEFIGDAVVLSAHVDGGRAHCALGDVAVASNGVHGNARVMLRPEQIEVTTDGAGMSGTVVDVEYLGSEMLLGIRLDTGDGEVPERVTVRRFGATALTPGDRVGIRVLGQAVAYDI.

In terms of domain architecture, ABC transporter spans 5–235 (LEVDGVDKSF…PIDVATAEFI (231 aa)). 37-44 (GPSGCGKT) contacts ATP.

Belongs to the ABC transporter superfamily. Fe(3+) ion importer (TC 3.A.1.10) family. In terms of assembly, the complex is composed of two ATP-binding proteins (FbpC), two transmembrane proteins (FbpB) and a solute-binding protein (FbpA).

The protein localises to the cell membrane. It catalyses the reaction Fe(3+)(out) + ATP + H2O = Fe(3+)(in) + ADP + phosphate + H(+). Functionally, part of the ABC transporter complex FbpABC involved in Fe(3+) ions import. Responsible for energy coupling to the transport system. The protein is Fe(3+) ions import ATP-binding protein FbpC 3 of Rhodococcus jostii (strain RHA1).